The chain runs to 174 residues: ATP-dependent protease subunit HslV (174 aa).

Residue T2 is part of the active site. Na(+) is bound by residues A156, C159, and T162.

It belongs to the peptidase T1B family. HslV subfamily. A double ring-shaped homohexamer of HslV is capped on each side by a ring-shaped HslU homohexamer. The assembly of the HslU/HslV complex is dependent on binding of ATP.

Its subcellular location is the cytoplasm. It carries out the reaction ATP-dependent cleavage of peptide bonds with broad specificity.. Allosterically activated by HslU binding. Functionally, protease subunit of a proteasome-like degradation complex believed to be a general protein degrading machinery. The polypeptide is ATP-dependent protease subunit HslV (Agrobacterium fabrum (strain C58 / ATCC 33970) (Agrobacterium tumefaciens (strain C58))).